Here is a 698-residue protein sequence, read N- to C-terminus: Polyphosphate kinase (698 aa).

N63 contributes to the ATP binding site. Mg(2+) contacts are provided by R390 and R420. H450 serves as the catalytic Phosphohistidine intermediate. The ATP site is built by Y483, R579, and H607.

The protein belongs to the polyphosphate kinase 1 (PPK1) family. Mg(2+) is required as a cofactor. In terms of processing, an intermediate of this reaction is the autophosphorylated ppk in which a phosphate is covalently linked to a histidine residue through a N-P bond.

The catalysed reaction is [phosphate](n) + ATP = [phosphate](n+1) + ADP. Its function is as follows. Catalyzes the reversible transfer of the terminal phosphate of ATP to form a long-chain polyphosphate (polyP). This is Polyphosphate kinase from Xylella fastidiosa (strain Temecula1 / ATCC 700964).